Reading from the N-terminus, the 211-residue chain is Large ribosomal subunit protein uL4 (211 aa).

Residues 48–89 (KRAGTASTKTRVEVRGGGAKPWRQKGTGRARAGSRTSPLWRG) are disordered.

This sequence belongs to the universal ribosomal protein uL4 family. As to quaternary structure, part of the 50S ribosomal subunit.

One of the primary rRNA binding proteins, this protein initially binds near the 5'-end of the 23S rRNA. It is important during the early stages of 50S assembly. It makes multiple contacts with different domains of the 23S rRNA in the assembled 50S subunit and ribosome. Functionally, forms part of the polypeptide exit tunnel. The protein is Large ribosomal subunit protein uL4 of Desulfotalea psychrophila (strain LSv54 / DSM 12343).